The sequence spans 325 residues: Elongation factor P--(R)-beta-lysine ligase (325 aa).

76–78 (SPE) contributes to the substrate binding site. Residues 100–102 (RNE) and N109 contribute to the ATP site. Y118 serves as a coordination point for substrate. Residue 244-245 (EL) coordinates ATP. Position 251 (E251) interacts with substrate. G300 lines the ATP pocket.

It belongs to the class-II aminoacyl-tRNA synthetase family. EpmA subfamily. Homodimer.

It carries out the reaction D-beta-lysine + L-lysyl-[protein] + ATP = N(6)-((3R)-3,6-diaminohexanoyl)-L-lysyl-[protein] + AMP + diphosphate + H(+). Functionally, with EpmB is involved in the beta-lysylation step of the post-translational modification of translation elongation factor P (EF-P). Catalyzes the ATP-dependent activation of (R)-beta-lysine produced by EpmB, forming a lysyl-adenylate, from which the beta-lysyl moiety is then transferred to the epsilon-amino group of a conserved specific lysine residue in EF-P. This Photorhabdus laumondii subsp. laumondii (strain DSM 15139 / CIP 105565 / TT01) (Photorhabdus luminescens subsp. laumondii) protein is Elongation factor P--(R)-beta-lysine ligase.